The primary structure comprises 490 residues: GTPase Der (490 aa).

EngA-type G domains lie at 3 to 166 and 203 to 376; these read PVVA…MEDL and IKLA…DSST. Residues 9-16, 56-60, 118-121, 209-216, 256-260, and 321-324 each bind GTP; these read GRPNVGKS, DTGGI, NKTD, DTAGV, and NKWD. A KH-like domain is found at 377–461; sequence RRVGTSMLTR…PIRIQFKEGE (85 aa).

Belongs to the TRAFAC class TrmE-Era-EngA-EngB-Septin-like GTPase superfamily. EngA (Der) GTPase family. In terms of assembly, associates with the 50S ribosomal subunit.

Its function is as follows. GTPase that plays an essential role in the late steps of ribosome biogenesis. This chain is GTPase Der, found in Escherichia coli O157:H7.